The primary structure comprises 210 residues: uncharacterized protein (210 aa).

5 helical membrane passes run Ile-42–Val-62, Ala-66–Met-86, Val-126–Gln-146, Ile-147–Leu-167, and Ala-189–Ile-209.

It belongs to the Rht family.

It localises to the cell membrane. This is an uncharacterized protein from Haemophilus influenzae (strain ATCC 51907 / DSM 11121 / KW20 / Rd).